The following is a 178-amino-acid chain: MSRIGNKAITIPTGVEIKQEGDQVTVKGPKGEITRSIASVISMNIEGSEAKFSRPDDSNRNKALHGTTRANVANMIEGVSKGFKKNLELVGVGYRASMQGDKLVLTVGFSHPVEFEAREGLKVAVPDATHISIEGISKQRVGDFAAEIRGVRPPEPYKGKGIRYQGEIVRRKEGKTGK.

This sequence belongs to the universal ribosomal protein uL6 family. Part of the 50S ribosomal subunit.

In terms of biological role, this protein binds to the 23S rRNA, and is important in its secondary structure. It is located near the subunit interface in the base of the L7/L12 stalk, and near the tRNA binding site of the peptidyltransferase center. The chain is Large ribosomal subunit protein uL6 from Oenococcus oeni (strain ATCC BAA-331 / PSU-1).